The following is a 177-amino-acid chain: Iron-sulfur cluster assembly protein SufA (177 aa).

Residues 1-18 (MTIHIFLCFLLILKIVNA) form the signal peptide. Cys-101, Cys-169, and Cys-171 together coordinate [4Fe-4S] cluster.

Belongs to the HesB/IscA family. In terms of assembly, homodimer. Homotetramer formation is observed in vitro.

It localises to the plastid. Its subcellular location is the apicoplast. It participates in cofactor biosynthesis; iron-sulfur cluster biosynthesis. Functionally, participates in the sulfur mobilization (SUF) pathway for iron-sulfur (Fe-S) cluster biogenesis. Involved in the pre-assembly of [4Fe-4S] clusters and their transfer to target proteins. This Plasmodium falciparum (isolate 3D7) protein is Iron-sulfur cluster assembly protein SufA.